A 319-amino-acid chain; its full sequence is Aliphatic sulfonates import ATP-binding protein SsuB 1 (319 aa).

Residues 63 to 282 enclose the ABC transporter domain; it reads VTLSGVSKRF…ARASAAFAAL (220 aa). Residue 95-102 participates in ATP binding; the sequence is GRSGCGKS.

It belongs to the ABC transporter superfamily. Aliphatic sulfonates importer (TC 3.A.1.17.2) family. In terms of assembly, the complex is composed of two ATP-binding proteins (SsuB), two transmembrane proteins (SsuC) and a solute-binding protein (SsuA).

It localises to the cell inner membrane. It catalyses the reaction ATP + H2O + aliphatic sulfonate-[sulfonate-binding protein]Side 1 = ADP + phosphate + aliphatic sulfonateSide 2 + [sulfonate-binding protein]Side 1.. Functionally, part of the ABC transporter complex SsuABC involved in aliphatic sulfonates import. Responsible for energy coupling to the transport system. The polypeptide is Aliphatic sulfonates import ATP-binding protein SsuB 1 (Burkholderia lata (strain ATCC 17760 / DSM 23089 / LMG 22485 / NCIMB 9086 / R18194 / 383)).